The following is a 176-amino-acid chain: Inorganic pyrophosphatase (176 aa).

Residues Lys31, Arg45, and Tyr57 each contribute to the substrate site. Mg(2+) contacts are provided by Asp67, Asp72, and Asp104. Substrate is bound at residue Tyr141.

This sequence belongs to the PPase family. Homohexamer. The cofactor is Mg(2+).

The protein localises to the cytoplasm. It catalyses the reaction diphosphate + H2O = 2 phosphate + H(+). Catalyzes the hydrolysis of inorganic pyrophosphate (PPi) forming two phosphate ions. This Methanopyrus kandleri (strain AV19 / DSM 6324 / JCM 9639 / NBRC 100938) protein is Inorganic pyrophosphatase.